Reading from the N-terminus, the 24-residue chain is Antimicrobial peptide PGQ (24 aa).

It belongs to the gastrin/cholecystokinin family. Magainin subfamily. As to expression, is synthesized in the stomach and stored in a novel granular multinucleated cell in the gastric mucosa. It is stored as active, processed peptides in large granules within the granular gland secretions of the skin.

Its subcellular location is the secreted. Its function is as follows. Antimicrobial peptide. The polypeptide is Antimicrobial peptide PGQ (pgq) (Xenopus laevis (African clawed frog)).